Here is a 507-residue protein sequence, read N- to C-terminus: AMSH-like ubiquitin thioesterase 3 (507 aa).

Residues 73–107 (QERLGSRKRLRAVINELESLKPEFNQLVDKLNRVE) are a coiled coil. 2 disordered regions span residues 133–162 (HKAS…LTSS) and 214–242 (PSNT…LNGD). Polar residues-rich tracts occupy residues 146-162 (LPTS…LTSS), 214-224 (PSNTDWGSADN), and 232-242 (PSSSSASLNGD). An MPN domain is found at 333 to 463 (LHVPVRIMDD…IFHLSDPSGV (131 aa)). The Zn(2+) site is built by H411, H413, D424, H426, C469, H475, and H477. The short motif at 411–424 (HTHPTQTCFMSSVD) is the JAMM motif element.

The protein belongs to the peptidase M67C family. In terms of assembly, interacts with PATL1 and PATL2. May also bind to HSC70-1, HSC70-3, VHA-A, BGLU23 and EPSIN1. Interacts with BRO1/ALIX. Requires Zn(2+) as cofactor.

It localises to the membrane. It is found in the cytoplasm. The protein localises to the vacuole membrane. The protein resides in the late endosome. Zinc metalloprotease that cleaves 'Lys-48'- and 'Lys-63'-linked polyubiquitin chains, but is not implicated in protein degradation by the 26S proteasome, deneddylation, or desumoylation. Required for intracellular trafficking (e.g. trafficking from the Golgi to the vacuole and the vacuolar trafficking of endocytosed cargo), endocytosis and vacuole biogenesis. This is AMSH-like ubiquitin thioesterase 3 (AMSH3) from Arabidopsis thaliana (Mouse-ear cress).